The primary structure comprises 191 residues: Large ribosomal subunit protein uL5 (191 aa).

This sequence belongs to the universal ribosomal protein uL5 family. As to quaternary structure, part of the 50S ribosomal subunit; part of the 5S rRNA/L5/L18/L25 subcomplex. Contacts the 5S rRNA and the P site tRNA. Forms a bridge to the 30S subunit in the 70S ribosome.

This is one of the proteins that bind and probably mediate the attachment of the 5S RNA into the large ribosomal subunit, where it forms part of the central protuberance. In the 70S ribosome it contacts protein S13 of the 30S subunit (bridge B1b), connecting the 2 subunits; this bridge is implicated in subunit movement. Contacts the P site tRNA; the 5S rRNA and some of its associated proteins might help stabilize positioning of ribosome-bound tRNAs. This chain is Large ribosomal subunit protein uL5, found in Micrococcus luteus (Micrococcus lysodeikticus).